A 344-amino-acid polypeptide reads, in one-letter code: Late embryogenesis abundant protein 17 (344 aa).

2 disordered regions span residues 1 to 20 (MASRQDRREARAEADARRAA) and 116 to 258 (KDYT…QGQG). Residues 3–52 (SRQDRREARAEADARRAAEEIARARDERVMQAEVDARSAADEIARARADR) are a coiled coil. Composition is skewed to basic and acidic residues over residues 116–163 (KDYT…KDAV), 172–230 (EATK…DATK), and 238–252 (DKARETAATHDDATD).

It belongs to the LEA type 4 family. Expressed in embryos.

It is found in the nucleus. Involved in abiotic stress responses. May function as chaperone and contribute to prevent the formation of damaging protein aggregates. This chain is Late embryogenesis abundant protein 17, found in Oryza sativa subsp. japonica (Rice).